Reading from the N-terminus, the 360-residue chain is C-X-C chemokine receptor type 2 (360 aa).

Residues 1–48 lie on the Extracellular side of the membrane; that stretch reads MEDFNMESDSFEDFWKGEDLSNYSYSSTLPPFLLDAAPCEPESLEINK. N22 is a glycosylation site (N-linked (GlcNAc...) asparagine). The chain crosses the membrane as a helical span at residues 49-75; that stretch reads YFVVIIYALVFLLSLLGNSLVMLVILY. Topologically, residues 76–84 are cytoplasmic; sequence SRVGRSVTD. The helical transmembrane segment at 85-105 threads the bilayer; it reads VYLLNLALADLLFALTLPIWA. Over 106–120 the chain is Extracellular; sequence ASKVNGWIFGTFLCK. An intrachain disulfide couples C119 to C196. The chain crosses the membrane as a helical span at residues 121-142; sequence VVSLLKEVNFYSGILLLACISV. The Cytoplasmic portion of the chain corresponds to 143-163; the sequence is DRYLAIVHATRTLTQKRYLVK. Residues 164–183 traverse the membrane as a helical segment; it reads FICLSIWGLSLLLALPVLLF. At 184–208 the chain is on the extracellular side; the sequence is RRTVYSSNVSPACYEDMGNNTANWR. The helical transmembrane segment at 209–231 threads the bilayer; sequence MLLRILPQSFGFIVPLLIMLFCY. At 232–251 the chain is on the cytoplasmic side; that stretch reads GFTLRTLFKAHMGQKHRAMR. Residues 252 to 273 traverse the membrane as a helical segment; that stretch reads VIFAVVLIFLLCWLPYNLVLLA. At 274-294 the chain is on the extracellular side; sequence DTLMRTQVIQETCERRNHIDR. A helical membrane pass occupies residues 295–315; it reads ALDATEILGILHSCLNPLIYA. At 316–360 the chain is on the cytoplasmic side; that stretch reads FIGQKFRHGLLKILAIHGLISKDSLPKDSRPSFVGSSSGHTSTTL. Phosphoserine occurs at positions 347, 351, 352, and 353.

This sequence belongs to the G-protein coupled receptor 1 family. Interacts with IL8. Interacts with GNAI2. Post-translationally, phosphorylated upon ligand binding; which is required for desensitization. (Microbial infection) Proteolytically cleaved by Staphylococcus aureus staphopain A/SspP. This cleavage inhibits CXCR2-dependent neutrophil activation and chemotaxis.

Its subcellular location is the cell membrane. Receptor for interleukin-8 which is a powerful neutrophil chemotactic factor. Binding of IL-8 to the receptor causes activation of neutrophils. This response is mediated via a G-protein that activates a phosphatidylinositol-calcium second messenger system. Binds to IL-8 with high affinity. Also binds with high affinity to CXCL3, GRO/MGSA and NAP-2. In Homo sapiens (Human), this protein is C-X-C chemokine receptor type 2 (CXCR2).